The primary structure comprises 350 residues: Phosphotriesterase-related protein (350 aa).

The a divalent metal cation site is built by His22, His24, Glu169, His201, His230, and Asp298.

Belongs to the metallo-dependent hydrolases superfamily. Phosphotriesterase family. The cofactor is a divalent metal cation.

The sequence is that of Phosphotriesterase-related protein from Drosophila ananassae (Fruit fly).